A 485-amino-acid polypeptide reads, in one-letter code: MKLRDLIGNDAAIEPAVAALEVTGVALDSRVVRPGDLFFALAGSKTDGARFIDAAVAAGAVAIVGDHAPDGCKVPFIAVANPRRALALAAARFFPAQPATIAAVTGTSGKTSVAAFTRQIWERLGHASASIGTIGLVSPKRTVYGSLTTPDPIALHRQMDEIAREGVTHLAFEASSHGLDQYRLDGVRVSAGGFTNLSRDHMDYHPTVAHYLAAKLRLFRELVPPGGAAVISADHDCSAEAIDAAKARGLRVMAVGRNGDGAGEGIRLTEVGVDGFSQKLTVEHRGKRYVVLLPLAGEFQVENALVSAGLAIGTGSDAANVFASLEHLEGAKGRLERVGERNGAPIFVDYAHKPDALAKALQALRPYAKRRLVVVFGAGGDRDAGKRPIMGEIAAENADGVIITDDNPRSEQPEAIRAAILATAKGAREIGDRAAAIRAAIEELEQGDALLIAGKGHETGQIVGSEVLPFSDHEAVAAALASRVA.

Residues Leu27 and Ser29 each contribute to the UDP-N-acetyl-alpha-D-muramoyl-L-alanyl-D-glutamate site. ATP is bound at residue Gly106–Ser112. UDP-N-acetyl-alpha-D-muramoyl-L-alanyl-D-glutamate-binding positions include Thr148 to Thr149, Ser175, Gln181, and Arg183. N6-carboxylysine is present on Lys215. Meso-2,6-diaminopimelate is bound by residues Arg382, Asp406–Arg409, Gly454, and Glu458. The short motif at Asp406–Arg409 is the Meso-diaminopimelate recognition motif element.

The protein belongs to the MurCDEF family. MurE subfamily. Mg(2+) serves as cofactor. In terms of processing, carboxylation is probably crucial for Mg(2+) binding and, consequently, for the gamma-phosphate positioning of ATP.

It is found in the cytoplasm. The enzyme catalyses UDP-N-acetyl-alpha-D-muramoyl-L-alanyl-D-glutamate + meso-2,6-diaminopimelate + ATP = UDP-N-acetyl-alpha-D-muramoyl-L-alanyl-gamma-D-glutamyl-meso-2,6-diaminopimelate + ADP + phosphate + H(+). It participates in cell wall biogenesis; peptidoglycan biosynthesis. Its function is as follows. Catalyzes the addition of meso-diaminopimelic acid to the nucleotide precursor UDP-N-acetylmuramoyl-L-alanyl-D-glutamate (UMAG) in the biosynthesis of bacterial cell-wall peptidoglycan. The chain is UDP-N-acetylmuramoyl-L-alanyl-D-glutamate--2,6-diaminopimelate ligase from Bradyrhizobium diazoefficiens (strain JCM 10833 / BCRC 13528 / IAM 13628 / NBRC 14792 / USDA 110).